A 719-amino-acid polypeptide reads, in one-letter code: NF-kappa-B inhibitor zeta (719 aa).

Over residues 46-81 (GACDGGCSASGPSAPGSPGSDSSDFSSASSVSSCGA) the composition is skewed to low complexity. Positions 46–97 (GACDGGCSASGPSAPGSPGSDSSDFSSASSVSSCGAVESRPRGGARAERLQV) are disordered. The segment covering 84–97 (SRPRGGARAERLQV) has biased composition (basic and acidic residues). An OCA domain is found at 108 to 130 (RGPFQGVRVKNSVKELLLHIRSH). Positions 164–179 (KRKGSDSLSDGPACKR) match the Nuclear localization signal motif. Disordered stretches follow at residues 188–210 (LTPP…ESKQ) and 289–343 (YSPQ…FAPL). Basic and acidic residues predominate over residues 201–210 (EDVHHNESKQ). Positions 322 to 394 (SYEPHLFGRE…LARPDASSTP (73 aa)) are required for transcriptional activity. An interaction with NFKB1/p50 region spans residues 405-719 (GGNPMSTTQL…KSIQQRAPPY (315 aa)). 7 ANK repeats span residues 444-473 (DGDT…ALHM), 480-509 (NGQS…QVNT), 513-542 (WGRT…GSNQ), 552-581 (DGLT…HSPE), 583-608 (QELL…AVEA), 613-642 (SGRT…CLSF), and 649-682 (NGNT…DPST).

As to quaternary structure, interacts with NFKB1/p50. Interacts with RELA. Interacts with AKIRIN2.

Its subcellular location is the nucleus. Its function is as follows. Involved in regulation of NF-kappa-B transcription factor complexes. Inhibits NF-kappa-B activity without affecting its nuclear translocation upon stimulation. Inhibits DNA-binding of RELA and NFKB1/p50, and of the NF-kappa-B p65-p50 heterodimer and the NF-kappa-B p50-p50 homodimer. Also seems to activate NF-kappa-B-mediated transcription. In vitro, upon association with NFKB1/p50 has transcriptional activation activity and, together with NFKB1/p50 and RELA, is recruited to LCN2 promoters. Promotes transcription of LCN2 and DEFB4. Is recruited to IL-6 promoters and activates IL-6 but decreases TNF-alpha production in response to LPS. Seems to be involved in the induction of inflammatory genes activated through TLR/IL-1 receptor signaling. Involved in the induction of T helper 17 cells (Th17) differentiation upon recognition of antigen by T cell antigen receptor (TCR). The sequence is that of NF-kappa-B inhibitor zeta (NFKBIZ) from Bos taurus (Bovine).